An 81-amino-acid polypeptide reads, in one-letter code: Exodeoxyribonuclease 7 small subunit (81 aa).

It belongs to the XseB family. In terms of assembly, heterooligomer composed of large and small subunits.

Its subcellular location is the cytoplasm. The enzyme catalyses Exonucleolytic cleavage in either 5'- to 3'- or 3'- to 5'-direction to yield nucleoside 5'-phosphates.. Functionally, bidirectionally degrades single-stranded DNA into large acid-insoluble oligonucleotides, which are then degraded further into small acid-soluble oligonucleotides. The protein is Exodeoxyribonuclease 7 small subunit of Nitratidesulfovibrio vulgaris (strain ATCC 29579 / DSM 644 / CCUG 34227 / NCIMB 8303 / VKM B-1760 / Hildenborough) (Desulfovibrio vulgaris).